The chain runs to 169 residues: S-ribosylhomocysteine lyase (169 aa).

Fe cation contacts are provided by His-54, His-58, and Cys-128.

It belongs to the LuxS family. As to quaternary structure, homodimer. The cofactor is Fe cation.

The catalysed reaction is S-(5-deoxy-D-ribos-5-yl)-L-homocysteine = (S)-4,5-dihydroxypentane-2,3-dione + L-homocysteine. Its function is as follows. Involved in the synthesis of autoinducer 2 (AI-2) which is secreted by bacteria and is used to communicate both the cell density and the metabolic potential of the environment. The regulation of gene expression in response to changes in cell density is called quorum sensing. Catalyzes the transformation of S-ribosylhomocysteine (RHC) to homocysteine (HC) and 4,5-dihydroxy-2,3-pentadione (DPD). The protein is S-ribosylhomocysteine lyase of Shewanella sp. (strain MR-7).